The chain runs to 362 residues: L-arginine:L-lysine amidinotransferase (362 aa).

Catalysis depends on residues Asp195 and His244. Cys346 acts as the Amidino-cysteine intermediate in catalysis.

It belongs to the amidinotransferase family.

The enzyme catalyses L-lysine + L-arginine = L-homoarginine + L-ornithine. It carries out the reaction L-canavanine + L-ornithine = L-canaline + L-arginine + H(+). Involved in the biosynthesis of phaseolotoxin, a nonhost-specific toxin which is a key component in the development of the halo blight disease of beans. Catalyzes the transfer of an amidino group from arginine to lysine to produce one molecule of homoarginine and one molecule of ornithine, both being precursors in the biosynthesis of phaseolotoxin. Can also use L-canavanine as an alternative amidine donor with L-ornithine as amidine acceptor. This Pseudomonas savastanoi pv. phaseolicola (Pseudomonas syringae pv. phaseolicola) protein is L-arginine:L-lysine amidinotransferase.